The sequence spans 211 residues: ATP-dependent Clp protease proteolytic subunit (211 aa).

The active-site Nucleophile is the S106. H131 is a catalytic residue.

Belongs to the peptidase S14 family. Fourteen ClpP subunits assemble into 2 heptameric rings which stack back to back to give a disk-like structure with a central cavity, resembling the structure of eukaryotic proteasomes.

Its subcellular location is the cytoplasm. It catalyses the reaction Hydrolysis of proteins to small peptides in the presence of ATP and magnesium. alpha-casein is the usual test substrate. In the absence of ATP, only oligopeptides shorter than five residues are hydrolyzed (such as succinyl-Leu-Tyr-|-NHMec, and Leu-Tyr-Leu-|-Tyr-Trp, in which cleavage of the -Tyr-|-Leu- and -Tyr-|-Trp bonds also occurs).. Its function is as follows. Cleaves peptides in various proteins in a process that requires ATP hydrolysis. Has a chymotrypsin-like activity. Plays a major role in the degradation of misfolded proteins. The sequence is that of ATP-dependent Clp protease proteolytic subunit from Nitrobacter hamburgensis (strain DSM 10229 / NCIMB 13809 / X14).